The sequence spans 356 residues: Heat-inducible transcription repressor HrcA (356 aa).

The protein belongs to the HrcA family.

Functionally, negative regulator of class I heat shock genes (grpE-dnaK-dnaJ and groELS operons). Prevents heat-shock induction of these operons. The chain is Heat-inducible transcription repressor HrcA from Chlorobaculum tepidum (strain ATCC 49652 / DSM 12025 / NBRC 103806 / TLS) (Chlorobium tepidum).